Reading from the N-terminus, the 468-residue chain is UDP-glycosyltransferase 89B2 (468 aa).

Residues serine 287, tryptophan 347–valine 348, histidine 365–glutamate 373, and serine 387–glutamine 390 contribute to the UDP-alpha-D-glucose site.

Belongs to the UDP-glycosyltransferase family.

May glycosylate diterpenes or flavonols in leaves. The chain is UDP-glycosyltransferase 89B2 from Stevia rebaudiana (Stevia).